We begin with the raw amino-acid sequence, 1210 residues long: V-type proton ATPase 116 kDa subunit a 4 (1210 aa).

The Cytoplasmic segment spans residues 1–715 (MSSFSNVGFV…YTIITFPFLF (715 aa)). The segment covering 259–271 (SSKISFTSSSPSP) has biased composition (low complexity). The segment at 259–292 (SSKISFTSSSPSPQRNPKNEAQKNSSSKREETSM) is disordered. Basic and acidic residues predominate over residues 275-291 (PKNEAQKNSSSKREETS). Positions 339-405 (FVKQMRRCEE…EREFLDLNNN (67 aa)) form a coiled coil. Residues 716-736 (AVMFGDAAHGAILLLAALFFI) traverse the membrane as a helical segment. Over 737 to 760 (RNERKIESKKIRDEIFNTFYGGRY) the chain is Extracellular. A helical membrane pass occupies residues 761 to 781 (IMMLMGIFSIYTGFLYNDAFA). Residues 782-855 (KSFNVFGSGW…SFLNSMKMKA (74 aa)) lie on the Cytoplasmic side of the membrane. A helical membrane pass occupies residues 856 to 876 (SVIIGITQMTFGVFLSVLNHI). Topologically, residues 877-892 (HFKSYIDIISNFIPQV) are extracellular. The helical transmembrane segment at 893 to 913 (IFLSCIFIYLCIQIIVKWIFF) threads the bilayer. Residues 914 to 976 (SVNAENVFGF…WYPNQRLVET (63 aa)) are Cytoplasmic-facing. The helical transmembrane segment at 977 to 997 (ILISISLACIPIMLFGKPLWV) threads the bilayer. Over 998–1127 (RFVTSKRHKL…NETIAMCLKP (130 aa)) the chain is Extracellular. Residues Asn1010, Asn1019, and Asn1118 are each glycosylated (N-linked (GlcNAc...) asparagine). The chain crosses the membrane as a helical span at residues 1128–1148 (VVACVAFFIFASLSLSILIMM). Topologically, residues 1149 to 1210 (EGLSAFLHAL…DISSGQHLHI (62 aa)) are cytoplasmic.

It belongs to the V-ATPase 116 kDa subunit family. V-ATPase is a heteromultimeric enzyme made up of two complexes: the ATP-hydrolytic V1 complex and the proton translocation V0 complex. The V1 complex consists of three catalytic AB heterodimers that form a heterohexamer, three peripheral stalks each consisting of EG heterodimers, one central rotor including subunits D and F, and the regulatory subunits C and H. The proton translocation complex V0 consists of the proton transport subunit a, a ring of proteolipid subunits c9c'', rotary subunit d, subunits e and f, and the accessory subunits vah-19/Ac45 and vah-20/PRR. Expressed in uterus.

The protein localises to the membrane. Subunit of the V0 complex of vacuolar(H+)-ATPase (V-ATPase), a multisubunit enzyme composed of a peripheral complex (V1) that hydrolyzes ATP and a membrane integral complex (V0) that translocates protons. V-ATPase is responsible for acidifying and maintaining the pH of intracellular compartments and in some cell types, is targeted to the plasma membrane, where it is responsible for acidifying the extracellular environment. This Caenorhabditis elegans protein is V-type proton ATPase 116 kDa subunit a 4.